A 514-amino-acid polypeptide reads, in one-letter code: Bifunctional purine biosynthesis protein PurH (514 aa).

One can recognise an MGS-like domain in the interval 1–145 (MIKRALISVS…KNYQDVAVIV (145 aa)).

The protein belongs to the PurH family.

The catalysed reaction is (6R)-10-formyltetrahydrofolate + 5-amino-1-(5-phospho-beta-D-ribosyl)imidazole-4-carboxamide = 5-formamido-1-(5-phospho-D-ribosyl)imidazole-4-carboxamide + (6S)-5,6,7,8-tetrahydrofolate. It catalyses the reaction IMP + H2O = 5-formamido-1-(5-phospho-D-ribosyl)imidazole-4-carboxamide. It functions in the pathway purine metabolism; IMP biosynthesis via de novo pathway; 5-formamido-1-(5-phospho-D-ribosyl)imidazole-4-carboxamide from 5-amino-1-(5-phospho-D-ribosyl)imidazole-4-carboxamide (10-formyl THF route): step 1/1. Its pathway is purine metabolism; IMP biosynthesis via de novo pathway; IMP from 5-formamido-1-(5-phospho-D-ribosyl)imidazole-4-carboxamide: step 1/1. The chain is Bifunctional purine biosynthesis protein PurH from Ruminiclostridium cellulolyticum (strain ATCC 35319 / DSM 5812 / JCM 6584 / H10) (Clostridium cellulolyticum).